The chain runs to 556 residues: WD repeat-containing protein srw1 (556 aa).

Residues 1 to 80 (MDEFDGFTRP…NEGDRFIPSR (80 aa)) form a disordered region. Residues 12 to 37 (SSNSSANRNSNNSMNRVENNNSNSDS) show a composition bias toward low complexity. Residues 43–55 (SRGDAHTRMRQGF) are compositionally biased toward basic and acidic residues. The residue at position 62 (serine 62) is a Phosphoserine. Basic and acidic residues predominate over residues 69–78 (RTNEGDRFIP). Threonine 98 is modified (phosphothreonine). A compositionally biased stretch (polar residues) spans 126–146 (TFNNSPIATPNTTIGVSTPRT). Residues 126-173 (TFNNSPIATPNTTIGVSTPRTDSGIDDIELTQRTPPSSSHTSSSILQN) are disordered. A compositionally biased stretch (low complexity) spans 159–169 (TPPSSSHTSSS). Phosphothreonine is present on threonine 177. Residues serine 187 and serine 214 each carry the phosphoserine modification. WD repeat units follow at residues 246–285 (GLAG…VTVM), 289–328 (YPTD…KTRT), 331–368 (GHTE…HYFR), 372–411 (AHRQ…PLYS), 414–456 (NHIA…MLHN), 458–499 (DTGS…RVGT), and 502–541 (GHTD…SKHS).

It belongs to the WD repeat CDC20/Fizzy family. Post-translationally, phosphorylated by cdc2-cdc13-CDK complex. This targets srw1 for proteolysis which in turn promotes cdc13 turnover. Dephosphorylated during G1 arrest.

It localises to the nucleus. Its function is as follows. Has a role in cell differentiation and cell cycling by negatively regulating cig2 and cdc12-associated cdc2. Down-regulates the level of cdc13, particularly in a nitrogen deprived environment. Regulator of cell cycle G1 phase progression. Prevents onset of mitosis during the pre-Start G1 period. Required for degradation of cdc13 mitotic cyclin B during G1 arrest but not during mitotic exit. This Schizosaccharomyces pombe (strain 972 / ATCC 24843) (Fission yeast) protein is WD repeat-containing protein srw1 (srw1).